A 498-amino-acid chain; its full sequence is Aldehyde dehydrogenase, mitochondrial (498 aa).

The N-terminal 9 residues, 1–9 (MLRATLARL), are a transit peptide targeting the mitochondrion. 242-247 (GSTAVG) is a binding site for NAD(+). The active-site Proton acceptor is the Glu-265. Catalysis depends on Cys-299, which acts as the Nucleophile.

The protein belongs to the aldehyde dehydrogenase family.

The protein localises to the mitochondrion. It catalyses the reaction an aldehyde + NAD(+) + H2O = a carboxylate + NADH + 2 H(+). The protein operates within alcohol metabolism; ethanol degradation; acetate from ethanol: step 2/2. Functionally, could have an RNA-binding activity in addition of its catalytic role. The polypeptide is Aldehyde dehydrogenase, mitochondrial (ALDH2) (Leishmania tarentolae (Sauroleishmania tarentolae)).